The following is a 380-amino-acid chain: TPR repeat-containing thioredoxin TDX (380 aa).

Valine 2 carries the N-acetylvaline modification. Positions 49–59 (TERDYEDKAET) are enriched in basic and acidic residues. The disordered stretch occupies residues 49 to 115 (TERDYEDKAE…DENRDDAQSE (67 aa)). Acidic residues predominate over residues 69–91 (DDDDDIMESDVELDNSDVVEPDN). Positions 106 to 115 (DENRDDAQSE) are enriched in basic and acidic residues. 3 TPR repeats span residues 112–145 (AQSEKSKAMEAISDGRFDEAIEHLTKAVMLNPTS), 147–179 (ILYATRASVFLKVKKPNAAIRDANVALQFNSDS), and 181–213 (KGYKSRGMAKAMLGQWEEAAADLHVASKLDYDE). The segment covering 240–263 (RKEKELQRAERERRKQQEAQEREA) has biased composition (basic and acidic residues). The tract at residues 240–265 (RKEKELQRAERERRKQQEAQEREAQA) is disordered. One can recognise a Thioredoxin domain in the interval 252–378 (RRKQQEAQER…LEQKIAQHSS (127 aa)). Residues cysteine 304 and cysteine 307 each act as nucleophile in the active site. Residues cysteine 304 and cysteine 307 are joined by a disulfide bond.

The protein belongs to the thioredoxin family. In terms of assembly, oligomerization under high temperature.

Thiol-disulfide oxidoreductase that possesses insulin disulfide bonds reducing activity, disulfide reductase, foldase chaperone and holdase chaperone activities. Heat shock causes oligomerization and formation of high molecular weiht (HMW) complexes with concomitant functional switching from a disulfide reductase and foldase chaperone to a holdase chaperone. May interact with HSP70 proteins through the TPR repeats. The protein is TPR repeat-containing thioredoxin TDX (TDX) of Arabidopsis thaliana (Mouse-ear cress).